The primary structure comprises 80 residues: Gamma-conotoxin PnVIIA (80 aa).

Residues 1 to 19 (MEKLTILLLVAAVLMSTQA) form the signal peptide. A propeptide spanning residues 20–43 (QNQEQRQQAKINFLSKRKPSAERW) is cleaved from the precursor. Intrachain disulfides connect cysteine 47–cysteine 61, cysteine 54–cysteine 65, and cysteine 60–cysteine 70. Glutamate 59 bears the 4-carboxyglutamate mark. Glutamate 71 carries the 4-carboxyglutamate modification. Position 76 is a 4-hydroxyproline (proline 76). The propeptide occupies 78–80 (FGA).

Expressed by the venom duct.

It is found in the secreted. Gamma-conotoxins may act on voltage-gated non-specific cation pacemaker channels (HCN). Triggers depolarization and firing of action potential bursts in the caudodorsal neurons of lymnaea. This effect is due to activation or enhancement of a slow inward cation current that may underlie endogenous bursting activity of these neurons. This Conus pennaceus (Feathered cone) protein is Gamma-conotoxin PnVIIA.